A 428-amino-acid polypeptide reads, in one-letter code: AP-1 complex subunit mu-2 (428 aa).

An MHD domain is found at 170-426; that stretch reads KNEVFLDVIE…ITMAGEYELR (257 aa).

The protein belongs to the adaptor complexes medium subunit family. As to quaternary structure, adaptor protein complex 1 (AP-1) is a heterotetramer composed of two large adaptins (gamma-type subunit and beta-type subunit), a medium adaptin (mu-type subunit) and a small adaptin (sigma-type subunit). In terms of tissue distribution, ubiquitous.

The protein resides in the golgi apparatus. It localises to the trans-Golgi network membrane. The protein localises to the early endosome membrane. Its subcellular location is the cytoplasmic vesicle. It is found in the clathrin-coated vesicle membrane. In terms of biological role, subunit of clathrin-associated adaptor protein complex 1 that plays a role in protein sorting at the trans-Golgi network and early endosomes (TGN/EE). The AP complexes mediate the recruitment of clathrin to membranes and the recognition of sorting signals within the cytosolic tails of transmembrane cargo molecules. Required for KNOLLE localization at the cell plate to mediate cytokinesis. Functions redundantly with AP1M1 in multiple post-Golgi trafficking pathways leading from the TGN to the vacuole, the plasma membrane, and the cell-division plane. In Arabidopsis thaliana (Mouse-ear cress), this protein is AP-1 complex subunit mu-2 (AP1M2).